Reading from the N-terminus, the 594-residue chain is Proteasome-associated ATPase (594 aa).

A compositionally biased stretch (polar residues) spans 1–12; that stretch reads MTETSANKPENT. A disordered region spans residues 1–20; that stretch reads MTETSANKPENTQAHEGRDY. Residues 18 to 71 adopt a coiled-coil conformation; sequence RDYSVLERQFNVLRDKLRNVDRQLAAATQNNTKMTTTLQSAKAEILRLKSALEK. 282-287 is a binding site for ATP; it reads GCGKTL. Positions 593 to 594 are docks into pockets in the proteasome alpha-ring; that stretch reads YL.

It belongs to the AAA ATPase family. In terms of assembly, homohexamer. Assembles into a hexameric ring structure that caps the 20S proteasome core. Strongly interacts with the prokaryotic ubiquitin-like protein Pup through a hydrophobic interface; the interacting region of ARC lies in its N-terminal coiled-coil domain. There is one Pup binding site per ARC hexamer ring. Upon ATP-binding, the C-terminus of ARC interacts with the alpha-rings of the proteasome core, possibly by binding to the intersubunit pockets.

The protein operates within protein degradation; proteasomal Pup-dependent pathway. ATPase which is responsible for recognizing, binding, unfolding and translocation of pupylated proteins into the bacterial 20S proteasome core particle. May be essential for opening the gate of the 20S proteasome via an interaction with its C-terminus, thereby allowing substrate entry and access to the site of proteolysis. Thus, the C-termini of the proteasomal ATPase may function like a 'key in a lock' to induce gate opening and therefore regulate proteolysis. This chain is Proteasome-associated ATPase, found in Renibacterium salmoninarum (strain ATCC 33209 / DSM 20767 / JCM 11484 / NBRC 15589 / NCIMB 2235).